The primary structure comprises 272 residues: Putative phosphoenolpyruvate synthase regulatory protein (272 aa).

152–159 (GVSRSGKT) lines the ADP pocket.

Belongs to the pyruvate, phosphate/water dikinase regulatory protein family. PSRP subfamily.

It carries out the reaction [pyruvate, water dikinase] + ADP = [pyruvate, water dikinase]-phosphate + AMP + H(+). The enzyme catalyses [pyruvate, water dikinase]-phosphate + phosphate + H(+) = [pyruvate, water dikinase] + diphosphate. Functionally, bifunctional serine/threonine kinase and phosphorylase involved in the regulation of the phosphoenolpyruvate synthase (PEPS) by catalyzing its phosphorylation/dephosphorylation. The protein is Putative phosphoenolpyruvate synthase regulatory protein of Methylibium petroleiphilum (strain ATCC BAA-1232 / LMG 22953 / PM1).